The following is a 401-amino-acid chain: Aspartokinase (401 aa).

This sequence belongs to the aspartokinase family.

It catalyses the reaction L-aspartate + ATP = 4-phospho-L-aspartate + ADP. The protein operates within amino-acid biosynthesis; L-lysine biosynthesis via DAP pathway; (S)-tetrahydrodipicolinate from L-aspartate: step 1/4. It functions in the pathway amino-acid biosynthesis; L-methionine biosynthesis via de novo pathway; L-homoserine from L-aspartate: step 1/3. Its pathway is amino-acid biosynthesis; L-threonine biosynthesis; L-threonine from L-aspartate: step 1/5. The chain is Aspartokinase (lysC) from Rickettsia conorii (strain ATCC VR-613 / Malish 7).